We begin with the raw amino-acid sequence, 152 residues long: Superoxide dismutase [Cu-Zn] 1 (152 aa).

Residues H45, H47, and H62 each contribute to the Cu cation site. A disulfide bond links C56 and C145. 4 residues coordinate Zn(2+): H62, H70, H79, and D82. Position 119 (H119) interacts with Cu cation.

The protein belongs to the Cu-Zn superoxide dismutase family. In terms of assembly, homodimer. It depends on Cu cation as a cofactor. The cofactor is Zn(2+).

Its subcellular location is the cytoplasm. It catalyses the reaction 2 superoxide + 2 H(+) = H2O2 + O2. In terms of biological role, destroys radicals which are normally produced within the cells and which are toxic to biological systems. The sequence is that of Superoxide dismutase [Cu-Zn] 1 (SODCC.1) from Mesembryanthemum crystallinum (Common ice plant).